A 64-amino-acid chain; its full sequence is Large ribosomal subunit protein bL35 (64 aa).

A disordered region spans residues methionine 1 to lysine 54. Positions lysine 12 to arginine 44 are enriched in basic residues.

It belongs to the bacterial ribosomal protein bL35 family.

The chain is Large ribosomal subunit protein bL35 from Chromohalobacter salexigens (strain ATCC BAA-138 / DSM 3043 / CIP 106854 / NCIMB 13768 / 1H11).